A 192-amino-acid polypeptide reads, in one-letter code: Lipid A acyltransferase PagP (192 aa).

The signal sequence occupies residues 1 to 26 (MTVVNKSFLTFLVFFCQILFPLNASA). Active-site residues include His-64, Asp-107, and Ser-108.

It belongs to the lipid A palmitoyltransferase family. Homodimer.

It is found in the cell outer membrane. The enzyme catalyses a lipid A + a 1,2-diacyl-sn-glycero-3-phosphocholine = a hepta-acyl lipid A + a 2-acyl-sn-glycero-3-phosphocholine. It carries out the reaction a lipid IVA + a 1,2-diacyl-sn-glycero-3-phosphocholine = a lipid IVB + a 2-acyl-sn-glycero-3-phosphocholine. The catalysed reaction is a lipid IIA + a 1,2-diacyl-sn-glycero-3-phosphocholine = a lipid IIB + a 2-acyl-sn-glycero-3-phosphocholine. Functionally, transfers a fatty acid residue from the sn-1 position of a phospholipid to the N-linked hydroxyfatty acid chain on the proximal unit of lipid A or its precursors. The polypeptide is Lipid A acyltransferase PagP (Cronobacter turicensis (strain DSM 18703 / CCUG 55852 / LMG 23827 / z3032)).